Here is a 607-residue protein sequence, read N- to C-terminus: Glycosyltransferase 25 family member (607 aa).

The first 22 residues, 1-22 (MKPVSCVGLLVLLVGVLVTVKG), serve as a signal peptide directing secretion. Residues N226, N254, N514, and N565 are each glycosylated (N-linked (GlcNAc...) asparagine). Positions 566-607 (DTSDSSAEKKGDKEQLSSKTLMDSTISRDEHELSVANRKSEL) are disordered. Basic and acidic residues-rich tracts occupy residues 571 to 581 (SAEKKGDKEQL) and 591 to 607 (ISRD…KSEL). The Prevents secretion from ER motif lies at 604 to 607 (KSEL).

This sequence belongs to the glycosyltransferase 25 family.

It localises to the endoplasmic reticulum lumen. The sequence is that of Glycosyltransferase 25 family member from Aedes aegypti (Yellowfever mosquito).